Here is a 215-residue protein sequence, read N- to C-terminus: Vesicle-trafficking protein SEC22b-A (215 aa).

The Cytoplasmic portion of the chain corresponds to 1–190; sequence MVLQTMIVRV…RSDAKYLNTR (190 aa). The Longin domain occupies 6 to 119; that stretch reads MIVRVADSLP…YSFIEFDTYI (114 aa). Residues 134–194 enclose the v-SNARE coiled-coil homology domain; that stretch reads NLGNINSELH…KYLNTRSTYA (61 aa). Residues 191 to 213 traverse the membrane as a helical segment; it reads STYAKVAAGAVIIITLIIYVRFW. The Lumenal segment spans residues 214–215; sequence WL.

Belongs to the synaptobrevin family. Component of 2 distinct SNARE complexes.

The protein resides in the endoplasmic reticulum membrane. It localises to the endoplasmic reticulum-Golgi intermediate compartment membrane. The protein localises to the golgi apparatus. It is found in the cis-Golgi network membrane. Its subcellular location is the trans-Golgi network membrane. The protein resides in the melanosome. SNARE involved in targeting and fusion of ER-derived transport vesicles with the Golgi complex as well as Golgi-derived retrograde transport vesicles with the ER. The polypeptide is Vesicle-trafficking protein SEC22b-A (Danio rerio (Zebrafish)).